A 424-amino-acid polypeptide reads, in one-letter code: Kynureninase (424 aa).

Residues leucine 109, threonine 110, 137-140 (FPSD), aspartate 222, histidine 225, and tyrosine 247 each bind pyridoxal 5'-phosphate. Residue lysine 248 is modified to N6-(pyridoxal phosphate)lysine. Residues tryptophan 278 and asparagine 306 each coordinate pyridoxal 5'-phosphate.

It belongs to the kynureninase family. Homodimer. Pyridoxal 5'-phosphate is required as a cofactor.

The enzyme catalyses L-kynurenine + H2O = anthranilate + L-alanine + H(+). The catalysed reaction is 3-hydroxy-L-kynurenine + H2O = 3-hydroxyanthranilate + L-alanine + H(+). Its pathway is amino-acid degradation; L-kynurenine degradation; L-alanine and anthranilate from L-kynurenine: step 1/1. It functions in the pathway cofactor biosynthesis; NAD(+) biosynthesis; quinolinate from L-kynurenine: step 2/3. Catalyzes the cleavage of L-kynurenine (L-Kyn) and L-3-hydroxykynurenine (L-3OHKyn) into anthranilic acid (AA) and 3-hydroxyanthranilic acid (3-OHAA), respectively. The chain is Kynureninase from Koribacter versatilis (strain Ellin345).